Reading from the N-terminus, the 170-residue chain is Putative calmodulin-like protein 6 (170 aa).

EF-hand domains lie at 8–43 (QQISDFRDAFSLFDKNNDGCISREELATVLTRLGMA), 44–79 (PSQEDLQDMIVAVDEDGNGTIEFDEFLAIMKKKLYE), 84–119 (DDEEELRKAFRIFDKDDNGFISRNELSMVMASLGEE), and 120–155 (MTEDEIDDMMKAADSNNDGQVDYEEFKRVMMSTWNI). The Ca(2+) site is built by Asp21, Asn23, Asp25, Cys27, Glu32, Asp57, Asp59, Asn61, Thr63, Glu68, Asp97, Asp99, Asn101, Glu108, Asp133, Asn135, Asp137, Gln139, and Glu144.

Belongs to the calmodulin family.

Its function is as follows. Potential calcium sensor. This is Putative calmodulin-like protein 6 (CML6) from Oryza sativa subsp. japonica (Rice).